A 662-amino-acid chain; its full sequence is Acyl-coenzyme A oxidase acox-1.4 (662 aa).

Residues 148-151 (YAQT), 156-157 (GT), and Gly-190 contribute to the FAD site. Substrate-binding positions include 284–287 (KVNH) and Arg-294. FAD contacts are provided by residues Arg-319 and 339–342 (QQHR). Residues His-341, Ser-391, His-395, and Gln-403 each contribute to the ATP site. Gly-410 is a binding site for FAD. 432–433 (YE) serves as a coordination point for substrate. The active-site Proton acceptor is Glu-433. Glu-435 lines the FAD pocket. Residues 526-529 (RASR) and Tyr-574 contribute to the ATP site. Positions 660 to 662 (AKL) match the Microbody targeting signal motif.

The protein belongs to the acyl-CoA oxidase family. In terms of assembly, homodimer. Requires FAD as cofactor.

It localises to the peroxisome. The catalysed reaction is asc-C9-CoA + O2 = asc-DeltaC9-CoA + H2O2. The protein operates within lipid metabolism; peroxisomal fatty acid beta-oxidation. Its activity is regulated as follows. Activated by ATP. ATP binding leads to a conformational change that promotes FAD cofactor binding and enzyme activity. ATP binding likely occurs during acox-1.4 folding and/or dimer formation. Its function is as follows. Involved in the first step of peroxisomal beta-oxidation by catalyzing the desaturation of fatty acid-derived side chains of ascaroside pheromones, which regulates development and behavior. Specifically, shortens ascarosides with a 9-carbon side chain (asc-C9) and, in association with acox-1.1, may contribute to the shortening of ascarosides with a 11-carbon side chain (asc-C11). May contribute to the production of indol-3-carbonyl(IC)-ascarosides in association with acox-1.1 and acox-3. The polypeptide is Acyl-coenzyme A oxidase acox-1.4 (Caenorhabditis elegans).